A 386-amino-acid polypeptide reads, in one-letter code: GTPase Obg (386 aa).

The Obg domain maps to serine 4 to leucine 162. The tract at residues lysine 18–glycine 45 is disordered. Positions glycine 36–glycine 45 are enriched in gly residues. The OBG-type G domain occupies alanine 163–asparagine 329. GTP-binding positions include glycine 169–serine 176, phenylalanine 194–glutamate 198, aspartate 216–glycine 219, threonine 283–aspartate 286, and serine 310–valine 312. Mg(2+) is bound by residues serine 176 and threonine 196. Residues glutamate 351–lysine 386 are disordered. The segment covering glycine 356–lysine 386 has biased composition (acidic residues).

It belongs to the TRAFAC class OBG-HflX-like GTPase superfamily. OBG GTPase family. As to quaternary structure, monomer. It depends on Mg(2+) as a cofactor.

The protein localises to the cytoplasm. In terms of biological role, an essential GTPase which binds GTP, GDP and possibly (p)ppGpp with moderate affinity, with high nucleotide exchange rates and a fairly low GTP hydrolysis rate. Plays a role in control of the cell cycle, stress response, ribosome biogenesis and in those bacteria that undergo differentiation, in morphogenesis control. In Bacteroides fragilis (strain YCH46), this protein is GTPase Obg.